Reading from the N-terminus, the 269-residue chain is Small ribosomal subunit protein uS2 (269 aa).

The segment at 228–269 (ARAERQAAAAKDAAGDTGKSEADAEAVKAEAAAEEKAETTEA) is disordered. Over residues 233–244 (QAAAAKDAAGDT) the composition is skewed to low complexity. Positions 245-269 (GKSEADAEAVKAEAAAEEKAETTEA) are enriched in basic and acidic residues.

The protein belongs to the universal ribosomal protein uS2 family.

This is Small ribosomal subunit protein uS2 from Corynebacterium urealyticum (strain ATCC 43042 / DSM 7109).